Here is a 396-residue protein sequence, read N- to C-terminus: Putative transposase y4rJ (396 aa).

Belongs to the transposase 20 family.

This chain is Putative transposase y4rJ, found in Sinorhizobium fredii (strain NBRC 101917 / NGR234).